The primary structure comprises 184 residues: Probable RNA 2'-phosphotransferase (184 aa).

Belongs to the KptA/TPT1 family.

In terms of biological role, removes the 2'-phosphate from RNA via an intermediate in which the phosphate is ADP-ribosylated by NAD followed by a presumed transesterification to release the RNA and generate ADP-ribose 1''-2''-cyclic phosphate (APPR&gt;P). May function as an ADP-ribosylase. The chain is Probable RNA 2'-phosphotransferase from Escherichia coli (strain 55989 / EAEC).